The primary structure comprises 916 residues: Oxysterol-binding protein 2 (916 aa).

Disordered stretches follow at residues 1–20, 34–121, and 139–163; these read MGKA…SRGL, TAAP…PFTK, and PESG…TPLG. Over residues 49–58 the composition is skewed to pro residues; that stretch reads EPKPQPQPVP. Residues 79–92 show a composition bias toward low complexity; that stretch reads RSEPVSETTSEPEP. Polar residues predominate over residues 99–113; it reads ELLQGSRPGSESSSG. Residues 144 to 155 show a composition bias toward low complexity; that stretch reads LPALKPLPLLRP. The region spanning 182–274 is the PH domain; sequence LDSFEGWLLK…WITALELAKA (93 aa). Disordered regions lie at residues 282–301 and 417–448; these read THSD…DKSE and FHSA…EEDE. A Phosphoserine modification is found at Ser-287. Ser-763 is modified (phosphoserine). A disordered region spans residues 813-842; it reads EGVAPTDSRLRPDQRLMEKGRWDEANTEKQ.

This sequence belongs to the OSBP family. In terms of assembly, interacts with CCDC159. Expressed mainly in retina, testis, and fetal liver.

The protein localises to the membrane. The protein resides in the cytoplasmic vesicle. It is found in the secretory vesicle. It localises to the acrosome. Its function is as follows. Binds 7-ketocholesterol. Acts during spermatid development where its function is required prior to the removal of cytoplasm from the sperm head. The chain is Oxysterol-binding protein 2 (OSBP2) from Homo sapiens (Human).